Reading from the N-terminus, the 131-residue chain is Profilin (131 aa).

It belongs to the profilin family. As to quaternary structure, occurs in many kinds of cells as a complex with monomeric actin in a 1:1 ratio.

It localises to the cytoplasm. The protein localises to the cytoskeleton. Its function is as follows. Binds to actin and affects the structure of the cytoskeleton. At high concentrations, profilin prevents the polymerization of actin, whereas it enhances it at low concentrations. By binding to PIP2, it inhibits the formation of IP3 and DG. The protein is Profilin of Capsicum annuum (Capsicum pepper).